The primary structure comprises 683 residues: Methionine--tRNA ligase (683 aa).

Positions 14 to 24 match the 'HIGH' region motif; that stretch reads PYANGSIHLGH. Zn(2+) is bound by residues Cys-145, Cys-148, Cys-158, and Cys-161. The short motif at 331 to 335 is the 'KMSKS' region element; sequence KMSKS. Lys-334 contributes to the ATP binding site. Residues 581–683 enclose the tRNA-binding domain; the sequence is AFAAVDLRVA…SGAKPGQRIK (103 aa).

It belongs to the class-I aminoacyl-tRNA synthetase family. MetG type 1 subfamily. As to quaternary structure, homodimer. It depends on Zn(2+) as a cofactor.

The protein resides in the cytoplasm. The catalysed reaction is tRNA(Met) + L-methionine + ATP = L-methionyl-tRNA(Met) + AMP + diphosphate. Functionally, is required not only for elongation of protein synthesis but also for the initiation of all mRNA translation through initiator tRNA(fMet) aminoacylation. The sequence is that of Methionine--tRNA ligase from Pseudomonas fluorescens (strain SBW25).